We begin with the raw amino-acid sequence, 182 residues long: Malignant T-cell-amplified sequence 1 homolog (182 aa).

A PUA domain is found at 93 to 172 (VTMQQVDKGA…IGIETYHFLN (80 aa)).

It belongs to the MCTS1 family. As to quaternary structure, interacts with DENR.

The protein resides in the cytoplasm. Its function is as follows. Regulates translation as part of a complex with DENR. Specifically required for translational re-initiation in mRNAs containing upstream open reading frames (uORFs). Not required for standard translational initiation. Regulates expression of a subset of gene products including mbc, InR and EcR. This chain is Malignant T-cell-amplified sequence 1 homolog, found in Drosophila melanogaster (Fruit fly).